The primary structure comprises 1187 residues: DNA-directed RNA polymerase subunit beta (1187 aa).

It belongs to the RNA polymerase beta chain family. In terms of assembly, the RNAP catalytic core consists of 2 alpha, 1 beta, 1 beta' and 1 omega subunit. When a sigma factor is associated with the core the holoenzyme is formed, which can initiate transcription.

The catalysed reaction is RNA(n) + a ribonucleoside 5'-triphosphate = RNA(n+1) + diphosphate. Functionally, DNA-dependent RNA polymerase catalyzes the transcription of DNA into RNA using the four ribonucleoside triphosphates as substrates. This is DNA-directed RNA polymerase subunit beta from Streptococcus mutans serotype c (strain ATCC 700610 / UA159).